Consider the following 312-residue polypeptide: Glyoxylate/hydroxypyruvate reductase A (312 aa).

Arg-227 is a catalytic residue. The Proton donor role is filled by His-275.

Belongs to the D-isomer specific 2-hydroxyacid dehydrogenase family. GhrA subfamily.

The protein localises to the cytoplasm. The enzyme catalyses glycolate + NADP(+) = glyoxylate + NADPH + H(+). It carries out the reaction (R)-glycerate + NAD(+) = 3-hydroxypyruvate + NADH + H(+). It catalyses the reaction (R)-glycerate + NADP(+) = 3-hydroxypyruvate + NADPH + H(+). Catalyzes the NADPH-dependent reduction of glyoxylate and hydroxypyruvate into glycolate and glycerate, respectively. The protein is Glyoxylate/hydroxypyruvate reductase A of Salmonella agona (strain SL483).